The primary structure comprises 436 residues: UDP-N-acetylglucosamine 1-carboxyvinyltransferase 1 (436 aa).

Position 22-23 (lysine 22–asparagine 23) interacts with phosphoenolpyruvate. Residue arginine 93 coordinates UDP-N-acetyl-alpha-D-glucosamine. The Proton donor role is filled by cysteine 117. Cysteine 117 carries the 2-(S-cysteinyl)pyruvic acid O-phosphothioketal modification. UDP-N-acetyl-alpha-D-glucosamine is bound by residues arginine 122 to glutamine 126, aspartate 306, and valine 328.

This sequence belongs to the EPSP synthase family. MurA subfamily.

It localises to the cytoplasm. The catalysed reaction is phosphoenolpyruvate + UDP-N-acetyl-alpha-D-glucosamine = UDP-N-acetyl-3-O-(1-carboxyvinyl)-alpha-D-glucosamine + phosphate. It participates in cell wall biogenesis; peptidoglycan biosynthesis. Cell wall formation. Adds enolpyruvyl to UDP-N-acetylglucosamine. Essential for cell growth. The sequence is that of UDP-N-acetylglucosamine 1-carboxyvinyltransferase 1 from Bacillus subtilis (strain 168).